Here is a 564-residue protein sequence, read N- to C-terminus: Proline--tRNA ligase (564 aa).

This sequence belongs to the class-II aminoacyl-tRNA synthetase family. ProS type 1 subfamily. As to quaternary structure, homodimer.

The protein resides in the cytoplasm. The enzyme catalyses tRNA(Pro) + L-proline + ATP = L-prolyl-tRNA(Pro) + AMP + diphosphate. Catalyzes the attachment of proline to tRNA(Pro) in a two-step reaction: proline is first activated by ATP to form Pro-AMP and then transferred to the acceptor end of tRNA(Pro). As ProRS can inadvertently accommodate and process non-cognate amino acids such as alanine and cysteine, to avoid such errors it has two additional distinct editing activities against alanine. One activity is designated as 'pretransfer' editing and involves the tRNA(Pro)-independent hydrolysis of activated Ala-AMP. The other activity is designated 'posttransfer' editing and involves deacylation of mischarged Ala-tRNA(Pro). The misacylated Cys-tRNA(Pro) is not edited by ProRS. The protein is Proline--tRNA ligase of Thermosipho melanesiensis (strain DSM 12029 / CIP 104789 / BI429).